Consider the following 258-residue polypeptide: Hydroxyacylglutathione hydrolase (258 aa).

Zn(2+) is bound by residues His56, His58, Asp60, His61, His112, Asp132, and His170.

Belongs to the metallo-beta-lactamase superfamily. Glyoxalase II family. As to quaternary structure, monomer. Zn(2+) is required as a cofactor.

The enzyme catalyses an S-(2-hydroxyacyl)glutathione + H2O = a 2-hydroxy carboxylate + glutathione + H(+). It participates in secondary metabolite metabolism; methylglyoxal degradation; (R)-lactate from methylglyoxal: step 2/2. Functionally, thiolesterase that catalyzes the hydrolysis of S-D-lactoyl-glutathione to form glutathione and D-lactic acid. This is Hydroxyacylglutathione hydrolase from Pseudomonas paraeruginosa (strain DSM 24068 / PA7) (Pseudomonas aeruginosa (strain PA7)).